The following is a 376-amino-acid chain: Cyclin-dependent kinase 9-A (376 aa).

The Protein kinase domain occupies 19-319; that stretch reads YERLAKIGQG…SDDALNNDFF (301 aa). ATP is bound by residues 25–33 and K48; that span reads IGQGTFGEV. D153 functions as the Proton acceptor in the catalytic mechanism. The interval 345–376 is disordered; sequence PPRRRGGHMPQQPANQARNPAATNQSEFERVF. Positions 354–369 are enriched in low complexity; it reads PQQPANQARNPAATNQ.

This sequence belongs to the protein kinase superfamily. CMGC Ser/Thr protein kinase family. CDC2/CDKX subfamily. Associates with cyclin-T to form P-TEFb.

Its subcellular location is the nucleus. The catalysed reaction is L-seryl-[protein] + ATP = O-phospho-L-seryl-[protein] + ADP + H(+). It carries out the reaction L-threonyl-[protein] + ATP = O-phospho-L-threonyl-[protein] + ADP + H(+). It catalyses the reaction [DNA-directed RNA polymerase] + ATP = phospho-[DNA-directed RNA polymerase] + ADP + H(+). Its function is as follows. Member of the cyclin-dependent kinase pair (CDK9/cyclin-T) complex, also called positive transcription elongation factor B (P-TEFb), which is proposed to facilitate the transition from abortive to production elongation by phosphorylating the CTD (C-terminal domain) of the large subunit of RNA polymerase II (RNAP II) and SUPT5H. The protein is Cyclin-dependent kinase 9-A (cdk9-a) of Xenopus laevis (African clawed frog).